A 668-amino-acid polypeptide reads, in one-letter code: DNA ligase (668 aa).

Residues 37–41 (DNVYD), 86–87 (SM), and glutamate 116 each bind NAD(+). Lysine 118 serves as the catalytic N6-AMP-lysine intermediate. Arginine 139, glutamate 173, lysine 288, and lysine 312 together coordinate NAD(+). Positions 406, 409, 424, and 429 each coordinate Zn(2+). A BRCT domain is found at 591 to 668 (APDNPFKDKT…TEEEAIAQIE (78 aa)).

The protein belongs to the NAD-dependent DNA ligase family. LigA subfamily. Mg(2+) serves as cofactor. Mn(2+) is required as a cofactor.

It carries out the reaction NAD(+) + (deoxyribonucleotide)n-3'-hydroxyl + 5'-phospho-(deoxyribonucleotide)m = (deoxyribonucleotide)n+m + AMP + beta-nicotinamide D-nucleotide.. In terms of biological role, DNA ligase that catalyzes the formation of phosphodiester linkages between 5'-phosphoryl and 3'-hydroxyl groups in double-stranded DNA using NAD as a coenzyme and as the energy source for the reaction. It is essential for DNA replication and repair of damaged DNA. This is DNA ligase from Lactobacillus helveticus (strain DPC 4571).